Reading from the N-terminus, the 598-residue chain is ATP-dependent lipid A-core flippase (598 aa).

Residues 1 to 15 show a composition bias toward polar residues; it reads MSQAYQPDSTKTSAK. The tract at residues 1-21 is disordered; sequence MSQAYQPDSTKTSAKTPVAPT. Helical transmembrane passes span 44–64, 85–105, 172–192, and 269–289; these read WWAI…EIWI, LFPF…FLGN, VVAL…ILFV, and INTP…VWLA. The ABC transmembrane type-1 domain occupies 48 to 329; it reads LLTIIGFAIN…LTDVNQQLQR (282 aa). The region spanning 360–595 is the ABC transporter domain; it reads IKLDNVSLVY…HGHYAQMYAR (236 aa). 393–400 contacts ATP; it reads GRSGAGKS.

It belongs to the ABC transporter superfamily. Lipid exporter (TC 3.A.1.106) family. As to quaternary structure, homodimer.

The protein localises to the cell inner membrane. It catalyses the reaction ATP + H2O + lipid A-core oligosaccharideSide 1 = ADP + phosphate + lipid A-core oligosaccharideSide 2.. In terms of biological role, involved in lipopolysaccharide (LPS) biosynthesis. Translocates lipid A-core from the inner to the outer leaflet of the inner membrane. Transmembrane domains (TMD) form a pore in the inner membrane and the ATP-binding domain (NBD) is responsible for energy generation. The polypeptide is ATP-dependent lipid A-core flippase (Psychrobacter cryohalolentis (strain ATCC BAA-1226 / DSM 17306 / VKM B-2378 / K5)).